A 553-amino-acid polypeptide reads, in one-letter code: ATP synthase F(1) complex subunit alpha, mitochondrial (553 aa).

A mitochondrion-targeting transit peptide spans 1-43 (MLSVRVAAAVARALPRRAGLVSKNALGSSFVAARNLHASNTRL). Ser-53 and Ser-65 each carry phosphoserine. At Ser-76 the chain carries Phosphoserine; alternate. O-linked (GlcNAc) serine; alternate glycosylation occurs at Ser-76. The residue at position 106 (Ser-106) is a Phosphoserine. 3 positions are modified to N6-acetyllysine: Lys-123, Lys-126, and Lys-132. Thr-134 carries the phosphothreonine modification. Residue Lys-161 is modified to N6-acetyllysine; alternate. N6-succinyllysine; alternate is present on Lys-161. Ser-166 is subject to Phosphoserine. Position 167 is an N6-acetyllysine; alternate (Lys-167). Lys-167 is subject to N6-succinyllysine; alternate. Position 184 is a phosphoserine (Ser-184). Arg-204 carries the post-translational modification Omega-N-methylarginine. The ATP site is built by Gln-215, Gly-217, Lys-218, Thr-219, and Ser-220. Thr-219 contacts Mg(2+). Residues Lys-230 and Lys-239 each carry the N6-acetyllysine; alternate modification. N6-succinyllysine; alternate occurs at positions 230 and 239. Lys-240 carries the post-translational modification N6-acetyllysine. N6-acetyllysine; alternate occurs at positions 261 and 305. N6-succinyllysine; alternate is present on residues Lys-261 and Lys-305. Asp-312 lines the Mg(2+) pocket. Lys-427 bears the N6-acetyllysine; alternate mark. Residue Lys-427 is modified to N6-succinyllysine; alternate. Lys-434 is subject to N6-acetyllysine. 2 residues coordinate ATP: Gln-473 and Gln-475. N6-acetyllysine; alternate is present on residues Lys-498, Lys-506, Lys-531, and Lys-539. N6-succinyllysine; alternate occurs at positions 498, 506, 531, and 539. At Lys-541 the chain carries N6-acetyllysine.

It belongs to the ATPase alpha/beta chains family. Homotrimer. Component of the ATP synthase complex composed at least of ATP5F1A/subunit alpha, ATP5F1B/subunit beta, ATP5MC1/subunit c (homooctomer), MT-ATP6/subunit a, MT-ATP8/subunit 8, ATP5ME/subunit e, ATP5MF/subunit f, ATP5MG/subunit g, ATP5MK/subunit k, ATP5MJ/subunit j, ATP5F1C/subunit gamma, ATP5F1D/subunit delta, ATP5F1E/subunit epsilon, ATP5PF/subunit F6, ATP5PB/subunit b, ATP5PD/subunit d, ATP5PO/subunit OSCP. ATP synthase complex consists of a soluble F(1) head domain (subunits alpha(3) and beta(3)) - the catalytic core - and a membrane F(0) domain - the membrane proton channel (subunits c, a, 8, e, f, g, k and j). These two domains are linked by a central stalk (subunits gamma, delta, and epsilon) rotating inside the F1 region and a stationary peripheral stalk (subunits F6, b, d, and OSCP). Interacts with ATPAF2. Interacts with HRG; the interaction occurs on the surface of T-cells and alters the cell morphology when associated with concanavalin (in vitro). Interacts with PLG (angiostatin peptide); the interaction inhibits most of the angiogenic properties of angiostatin. Interacts with BLOC1S1. Interacts with BCL2L1 isoform BCL-X(L); the interaction mediates the association of BCL2L1 isoform BCL-X(L) with the mitochondrial membrane F(1)F(0) ATP synthase and enhances neurons metabolic efficiency. Interacts with CLN5 and PPT1. Interacts with S100A1; this interaction increases F1-ATPase activity. Interacts with ABCB7; this interaction allows the regulation of cellular iron homeostasis and cellular reactive oxygen species (ROS) levels in cardiomyocytes. In terms of processing, acetylated on lysine residues. BLOC1S1 is required for acetylation. As to expression, expressed in heart (at protein level).

The protein localises to the mitochondrion. Its subcellular location is the mitochondrion inner membrane. It is found in the cell membrane. Functionally, subunit alpha, of the mitochondrial membrane ATP synthase complex (F(1)F(0) ATP synthase or Complex V) that produces ATP from ADP in the presence of a proton gradient across the membrane which is generated by electron transport complexes of the respiratory chain. ATP synthase complex consist of a soluble F(1) head domain - the catalytic core - and a membrane F(1) domain - the membrane proton channel. These two domains are linked by a central stalk rotating inside the F(1) region and a stationary peripheral stalk. During catalysis, ATP synthesis in the catalytic domain of F(1) is coupled via a rotary mechanism of the central stalk subunits to proton translocation. In vivo, can only synthesize ATP although its ATP hydrolase activity can be activated artificially in vitro. With the catalytic subunit beta (ATP5F1B), forms the catalytic core in the F(1) domain. Subunit alpha does not bear the catalytic high-affinity ATP-binding sites. The polypeptide is ATP synthase F(1) complex subunit alpha, mitochondrial (Sus scrofa (Pig)).